The primary structure comprises 965 residues: PWWP domain-containing protein 4 (965 aa).

The 62-residue stretch at 135 to 196 (VGDMVWGKVK…PAELIPFEPH (62 aa)) folds into the PWWP domain. Polar residues predominate over residues 437 to 455 (MNFTSSSGNIPGKKSSVSK). Disordered stretches follow at residues 437-507 (MNFT…KSSL), 526-577 (VVKR…KSSQ), 649-708 (SAKT…SLAP), and 905-927 (LSSQ…PPLD). 2 stretches are compositionally biased toward basic and acidic residues: residues 456 to 474 (LSRD…RMGE) and 481 to 495 (DQEK…KQDE). Over residues 496–507 (TGTNSRSNKSSL) the composition is skewed to polar residues. Residues 546–553 (KKKEYVSE) carry the Nuclear localization signal motif. The segment covering 549–563 (EYVSELNRDTPDKRK) has biased composition (basic and acidic residues). Positions 657-676 (NEQSKAGRNRISSDSQQDVP) are enriched in polar residues. Positions 691 to 702 (ASDKKTNQDATK) are enriched in basic and acidic residues. Positions 905-919 (LSSQDSEPKPVNNQV) are enriched in polar residues.

It belongs to the PDP family. As to quaternary structure, component of the PRC2 (polycomb repressive complex 2) complex which regulates histone methylation on histone H3K27.

The protein localises to the nucleus. Functionally, may influence gene expression by regulating the function of the PRC2 complex and modulating H3K27me3 level. This Arabidopsis thaliana (Mouse-ear cress) protein is PWWP domain-containing protein 4.